Consider the following 590-residue polypeptide: Ankyrin repeat domain-containing protein 13A (590 aa).

ANK repeat units lie at residues 40–69 and 73–102; these read RGRT…DVTK and QGWT…YHNT. Ser-205 is modified (phosphoserine). 4 consecutive UIM domains span residues 483-502, 519-538, 549-568, and 574-590; these read EDYE…SSRS, TYDA…STEG, RFDN…LEEW, and EEEA…LTDK. Ser-586 is subject to Phosphoserine.

Interacts (via the UIM 3 and 4 repeats) with EGFR (ubiquitinated); the interaction is direct, inhibited by ANKRD13A monoubiquitination and may regulate EGFR internalization. Post-translationally, monoubiquitinated, inhibits interaction with ubiquitinated EGFR.

It is found in the cell membrane. The protein resides in the late endosome. In terms of biological role, ubiquitin-binding protein that specifically recognizes and binds 'Lys-63'-linked ubiquitin. Does not bind 'Lys-48'-linked ubiquitin. Positively regulates the internalization of ligand-activated EGFR by binding to the Ub moiety of ubiquitinated EGFR at the cell membrane. In Homo sapiens (Human), this protein is Ankyrin repeat domain-containing protein 13A (ANKRD13A).